The following is a 483-amino-acid chain: NADH-quinone oxidoreductase subunit N (483 aa).

The next 13 helical transmembrane spans lie at 7–27, 33–53, 76–96, 108–128, 161–181, 196–216, 235–255, 272–292, 297–317, 323–343, 369–389, 402–422, and 442–462; these read AILT…LGAV, ALAS…AFYI, FAKI…QDYM, VLII…DLIA, FVLG…AYGF, GGDM…GLAF, PTPI…ALFA, IVAF…IGQT, LMAY…SAGT, AMLI…AFIL, ALAI…LGFF, GLVW…FYYI, and MGLV…LGWV.

Belongs to the complex I subunit 2 family. In terms of assembly, NDH-1 is composed of 14 different subunits. Subunits NuoA, H, J, K, L, M, N constitute the membrane sector of the complex.

It localises to the cell inner membrane. It catalyses the reaction a quinone + NADH + 5 H(+)(in) = a quinol + NAD(+) + 4 H(+)(out). Functionally, NDH-1 shuttles electrons from NADH, via FMN and iron-sulfur (Fe-S) centers, to quinones in the respiratory chain. The immediate electron acceptor for the enzyme in this species is believed to be ubiquinone. Couples the redox reaction to proton translocation (for every two electrons transferred, four hydrogen ions are translocated across the cytoplasmic membrane), and thus conserves the redox energy in a proton gradient. The protein is NADH-quinone oxidoreductase subunit N of Jannaschia sp. (strain CCS1).